The primary structure comprises 226 residues: Small ribosomal subunit protein uS3 (226 aa).

Residues 39 to 109 form the KH type-2 domain; sequence IYKFFDKFTR…KLDVNLKVLT (71 aa).

Belongs to the universal ribosomal protein uS3 family. In terms of assembly, part of the 30S ribosomal subunit. Forms a tight complex with proteins S10 and S14.

Functionally, binds the lower part of the 30S subunit head. Binds mRNA in the 70S ribosome, positioning it for translation. The polypeptide is Small ribosomal subunit protein uS3 (Mycoplasmopsis synoviae (strain 53) (Mycoplasma synoviae)).